The chain runs to 363 residues: UDP-N-acetylglucosamine--N-acetylmuramyl-(pentapeptide) pyrophosphoryl-undecaprenol N-acetylglucosamine transferase (363 aa).

UDP-N-acetyl-alpha-D-glucosamine is bound by residues 7-9 (TGG), asparagine 125, serine 196, isoleucine 251, and glutamine 296.

This sequence belongs to the glycosyltransferase 28 family. MurG subfamily.

It is found in the cell membrane. It carries out the reaction Mur2Ac(oyl-L-Ala-gamma-D-Glu-L-Lys-D-Ala-D-Ala)-di-trans,octa-cis-undecaprenyl diphosphate + UDP-N-acetyl-alpha-D-glucosamine = beta-D-GlcNAc-(1-&gt;4)-Mur2Ac(oyl-L-Ala-gamma-D-Glu-L-Lys-D-Ala-D-Ala)-di-trans,octa-cis-undecaprenyl diphosphate + UDP + H(+). It functions in the pathway cell wall biogenesis; peptidoglycan biosynthesis. Its function is as follows. Cell wall formation. Catalyzes the transfer of a GlcNAc subunit on undecaprenyl-pyrophosphoryl-MurNAc-pentapeptide (lipid intermediate I) to form undecaprenyl-pyrophosphoryl-MurNAc-(pentapeptide)GlcNAc (lipid intermediate II). The polypeptide is UDP-N-acetylglucosamine--N-acetylmuramyl-(pentapeptide) pyrophosphoryl-undecaprenol N-acetylglucosamine transferase (Latilactobacillus sakei subsp. sakei (strain 23K) (Lactobacillus sakei subsp. sakei)).